Here is a 350-residue protein sequence, read N- to C-terminus: Methylthioribose-1-phosphate isomerase (350 aa).

Residues 47–49 (RGA), R90, and Q197 contribute to the substrate site. The active-site Proton donor is D238. 248–249 (NK) serves as a coordination point for substrate.

Belongs to the eIF-2B alpha/beta/delta subunits family. MtnA subfamily.

It carries out the reaction 5-(methylsulfanyl)-alpha-D-ribose 1-phosphate = 5-(methylsulfanyl)-D-ribulose 1-phosphate. Its pathway is amino-acid biosynthesis; L-methionine biosynthesis via salvage pathway; L-methionine from S-methyl-5-thio-alpha-D-ribose 1-phosphate: step 1/6. Functionally, catalyzes the interconversion of methylthioribose-1-phosphate (MTR-1-P) into methylthioribulose-1-phosphate (MTRu-1-P). The polypeptide is Methylthioribose-1-phosphate isomerase (Nitratidesulfovibrio vulgaris (strain DP4) (Desulfovibrio vulgaris)).